A 430-amino-acid chain; its full sequence is Serine--tRNA ligase (430 aa).

Position 238-240 (238-240 (TAE)) interacts with L-serine. 269–271 (RRE) provides a ligand contact to ATP. Residue glutamate 292 participates in L-serine binding. 356 to 359 (EISS) contacts ATP. Serine 392 lines the L-serine pocket.

This sequence belongs to the class-II aminoacyl-tRNA synthetase family. Type-1 seryl-tRNA synthetase subfamily. As to quaternary structure, homodimer. The tRNA molecule binds across the dimer.

It is found in the cytoplasm. It catalyses the reaction tRNA(Ser) + L-serine + ATP = L-seryl-tRNA(Ser) + AMP + diphosphate + H(+). The catalysed reaction is tRNA(Sec) + L-serine + ATP = L-seryl-tRNA(Sec) + AMP + diphosphate + H(+). It functions in the pathway aminoacyl-tRNA biosynthesis; selenocysteinyl-tRNA(Sec) biosynthesis; L-seryl-tRNA(Sec) from L-serine and tRNA(Sec): step 1/1. In terms of biological role, catalyzes the attachment of serine to tRNA(Ser). Is also able to aminoacylate tRNA(Sec) with serine, to form the misacylated tRNA L-seryl-tRNA(Sec), which will be further converted into selenocysteinyl-tRNA(Sec). This Synechocystis sp. (strain ATCC 27184 / PCC 6803 / Kazusa) protein is Serine--tRNA ligase.